Consider the following 503-residue polypeptide: UDP-N-acetylmuramoylalanine--D-glutamate ligase (503 aa).

129–135 provides a ligand contact to ATP; it reads GTNGKTT.

This sequence belongs to the MurCDEF family.

Its subcellular location is the cytoplasm. It carries out the reaction UDP-N-acetyl-alpha-D-muramoyl-L-alanine + D-glutamate + ATP = UDP-N-acetyl-alpha-D-muramoyl-L-alanyl-D-glutamate + ADP + phosphate + H(+). Its pathway is cell wall biogenesis; peptidoglycan biosynthesis. In terms of biological role, cell wall formation. Catalyzes the addition of glutamate to the nucleotide precursor UDP-N-acetylmuramoyl-L-alanine (UMA). The polypeptide is UDP-N-acetylmuramoylalanine--D-glutamate ligase (Burkholderia cenocepacia (strain HI2424)).